The sequence spans 405 residues: Formate-dependent phosphoribosylglycinamide formyltransferase (405 aa).

Residues 22-23 and E82 each bind N(1)-(5-phospho-beta-D-ribosyl)glycinamide; that span reads EL. ATP is bound by residues R115, K162, 167-172, 202-205, and E210; these read SSGKGQ and EGFI. An ATP-grasp domain is found at 120–320; sequence RLAAETLGLP…EFELHARAIL (201 aa). 2 residues coordinate Mg(2+): E279 and E291. N(1)-(5-phospho-beta-D-ribosyl)glycinamide-binding positions include D298, K367, and 374–375; that span reads RR.

It belongs to the PurK/PurT family. As to quaternary structure, homodimer.

It carries out the reaction N(1)-(5-phospho-beta-D-ribosyl)glycinamide + formate + ATP = N(2)-formyl-N(1)-(5-phospho-beta-D-ribosyl)glycinamide + ADP + phosphate + H(+). It functions in the pathway purine metabolism; IMP biosynthesis via de novo pathway; N(2)-formyl-N(1)-(5-phospho-D-ribosyl)glycinamide from N(1)-(5-phospho-D-ribosyl)glycinamide (formate route): step 1/1. In terms of biological role, involved in the de novo purine biosynthesis. Catalyzes the transfer of formate to 5-phospho-ribosyl-glycinamide (GAR), producing 5-phospho-ribosyl-N-formylglycinamide (FGAR). Formate is provided by PurU via hydrolysis of 10-formyl-tetrahydrofolate. The polypeptide is Formate-dependent phosphoribosylglycinamide formyltransferase (Leptothrix cholodnii (strain ATCC 51168 / LMG 8142 / SP-6) (Leptothrix discophora (strain SP-6))).